A 188-amino-acid polypeptide reads, in one-letter code: Elongation factor P (188 aa).

The residue at position 34 (Lys34) is an N6-(3,6-diaminohexanoyl)-5-hydroxylysine.

It belongs to the elongation factor P family. May be beta-lysylated on the epsilon-amino group of Lys-34 by the combined action of EpmA and EpmB, and then hydroxylated on the C5 position of the same residue by EpmC (if this protein is present). Lysylation is critical for the stimulatory effect of EF-P on peptide-bond formation. The lysylation moiety may extend toward the peptidyltransferase center and stabilize the terminal 3-CCA end of the tRNA. Hydroxylation of the C5 position on Lys-34 may allow additional potential stabilizing hydrogen-bond interactions with the P-tRNA.

Its subcellular location is the cytoplasm. The protein operates within protein biosynthesis; polypeptide chain elongation. Involved in peptide bond synthesis. Alleviates ribosome stalling that occurs when 3 or more consecutive Pro residues or the sequence PPG is present in a protein, possibly by augmenting the peptidyl transferase activity of the ribosome. Modification of Lys-34 is required for alleviation. In Yersinia pseudotuberculosis serotype O:1b (strain IP 31758), this protein is Elongation factor P.